The following is a 391-amino-acid chain: 8-amino-7-oxononanoate synthase (391 aa).

A substrate-binding site is contributed by Arg19. A pyridoxal 5'-phosphate-binding site is contributed by 106-107 (GY). His131 lines the substrate pocket. Pyridoxal 5'-phosphate contacts are provided by Ser178, His206, and Thr234. N6-(pyridoxal phosphate)lysine is present on Lys237. Residue Thr353 coordinates substrate.

This sequence belongs to the class-II pyridoxal-phosphate-dependent aminotransferase family. BioF subfamily. Homodimer. Pyridoxal 5'-phosphate serves as cofactor.

It carries out the reaction 6-carboxyhexanoyl-[ACP] + L-alanine + H(+) = (8S)-8-amino-7-oxononanoate + holo-[ACP] + CO2. It functions in the pathway cofactor biosynthesis; biotin biosynthesis. Functionally, catalyzes the decarboxylative condensation of pimeloyl-[acyl-carrier protein] and L-alanine to produce 8-amino-7-oxononanoate (AON), [acyl-carrier protein], and carbon dioxide. The sequence is that of 8-amino-7-oxononanoate synthase from Geobacter sulfurreducens (strain ATCC 51573 / DSM 12127 / PCA).